The chain runs to 296 residues: MERSHVGRDCGSRSSPRAFSVPTSNVPMKMSIPFRPKQSLGQNFLHDPNMAEKIVGTLTAPPEAHVVEVGAGTGVLTERLAERHDRLTALEIDERAVEVLRERVPEADVRETDVRETDWAALADEKGGPLRVISNTPYYLTSPILFALLGQRDCLAEAVLTMQKEVAERIVAEPSTKAYGILSVLLQLFAEPTLCFTVPPQVFSPQPDVTSAVVRIRFGPDTEPEDLHFDDARRYVRAAFNQRRKMLRNSLSAWTKEQDVGFPNDWGRKRAEALTPDEFATLARHLDAHADPVPDA.

Residues 1–11 (MERSHVGRDCG) show a composition bias toward basic and acidic residues. Positions 1–24 (MERSHVGRDCGSRSSPRAFSVPTS) are disordered. A compositionally biased stretch (polar residues) spans 12 to 24 (SRSSPRAFSVPTS). 6 residues coordinate S-adenosyl-L-methionine: Asn43, Leu45, Gly70, Glu91, Asp113, and Asn135.

It belongs to the class I-like SAM-binding methyltransferase superfamily. rRNA adenine N(6)-methyltransferase family. RsmA subfamily.

The protein resides in the cytoplasm. The catalysed reaction is adenosine(1518)/adenosine(1519) in 16S rRNA + 4 S-adenosyl-L-methionine = N(6)-dimethyladenosine(1518)/N(6)-dimethyladenosine(1519) in 16S rRNA + 4 S-adenosyl-L-homocysteine + 4 H(+). Its function is as follows. Specifically dimethylates two adjacent adenosines (A1518 and A1519) in the loop of a conserved hairpin near the 3'-end of 16S rRNA in the 30S particle. May play a critical role in biogenesis of 30S subunits. This Salinibacter ruber (strain DSM 13855 / M31) protein is Ribosomal RNA small subunit methyltransferase A.